A 380-amino-acid polypeptide reads, in one-letter code: Geranylgeranyl pyrophosphate synthase cle6 (380 aa).

Positions 1–19 are enriched in low complexity; sequence MHSVRTSTTSTSSMVSSTM. A disordered region spans residues 1–55; the sequence is MHSVRTSTTSTSSMVSSTMHPFDAFNAPQPYQQHHPPRWNIHNPHFSQTNGHSIQ. Residues 45–55 show a composition bias toward polar residues; it reads HFSQTNGHSIQ. Lys102, Arg105, and His134 together coordinate isopentenyl diphosphate. 2 residues coordinate Mg(2+): Asp141 and Asp145. Arg150 serves as a coordination point for dimethylallyl diphosphate. Residue Arg151 coordinates isopentenyl diphosphate. Residues Lys229, Thr230, and Gln263 each coordinate dimethylallyl diphosphate. Asp266 serves as a coordination point for Mg(2+). Positions 270, 280, and 290 each coordinate dimethylallyl diphosphate.

It belongs to the FPP/GGPP synthase family. Requires Mg(2+) as cofactor.

It carries out the reaction isopentenyl diphosphate + dimethylallyl diphosphate = (2E)-geranyl diphosphate + diphosphate. The catalysed reaction is isopentenyl diphosphate + (2E)-geranyl diphosphate = (2E,6E)-farnesyl diphosphate + diphosphate. The enzyme catalyses isopentenyl diphosphate + (2E,6E)-farnesyl diphosphate = (2E,6E,10E)-geranylgeranyl diphosphate + diphosphate. It participates in secondary metabolite biosynthesis; terpenoid biosynthesis. Functionally, geranylgeranyl pyrophosphate synthase; part of the cluster A that mediates the biosynthesis of chevalone E and its oxidized derivatives that possess a unique five-membered lactone ring and can synergistically enhance the cytotoxicity of doxorubicin (DOX) in breast cancer cells. Within the pathway, cle6 takes part to the biosynthesis of the molecular scaffold by providing geranylgeranyl pyrophosphate (GGPP) to the prenyltransferase cle5 for C-3 geranylgeranylation of triacetic acid lactone. The molecular scaffold is commonly biosynthesized by a series of enzymes including the non-reducing polyketide synthase (NR-PKS) cle1 that produces the alpha-pyrone triacetic acid lactone (TAL); The membrane-bound prenyltransferase cle5 that accepts TAL as its substrate to perform a C-3 geranylgeranylation reaction, in which the pathway-dedicated GGPS cle6 is required to provide GGPP, the other substrate of cle5; the FAD-dependent monooxygenase Cle3 that forms an (S)-epoxide ring at the terminal olefin of the geranylgeranyl group; and the terpene cyclase Cle7 that catalyzes the cyclization of the prenyl group that yields the pentacyclic pathway intermediate chevalone E. Chevalone E can derivatize into seven new oxidized analogs by the cytochrome P450 monooxygenases cle2 (acting at C-20) and cle4 (acting at C-11 and C-12). In Aspergillus versicolor, this protein is Geranylgeranyl pyrophosphate synthase cle6.